A 112-amino-acid polypeptide reads, in one-letter code: Outer membrane protein assembly factor BamE (112 aa).

An N-terminal signal peptide occupies residues M1–G19. C20 is lipidated: N-palmitoyl cysteine. C20 is lipidated: S-diacylglycerol cysteine.

It belongs to the BamE family. Part of the Bam complex, which is composed of the outer membrane protein BamA, and four lipoproteins BamB, BamC, BamD and BamE.

It is found in the cell outer membrane. Functionally, part of the outer membrane protein assembly complex, which is involved in assembly and insertion of beta-barrel proteins into the outer membrane. This chain is Outer membrane protein assembly factor BamE, found in Salmonella typhimurium (strain LT2 / SGSC1412 / ATCC 700720).